The chain runs to 103 residues: Small ribosomal subunit protein uS10 (103 aa).

It belongs to the universal ribosomal protein uS10 family. Part of the 30S ribosomal subunit.

Functionally, involved in the binding of tRNA to the ribosomes. The polypeptide is Small ribosomal subunit protein uS10 (Ralstonia pickettii (strain 12J)).